The sequence spans 514 residues: ATP synthase subunit alpha (514 aa).

Gly170–Thr177 contacts ATP.

This sequence belongs to the ATPase alpha/beta chains family. As to quaternary structure, F-type ATPases have 2 components, CF(1) - the catalytic core - and CF(0) - the membrane proton channel. CF(1) has five subunits: alpha(3), beta(3), gamma(1), delta(1), epsilon(1). CF(0) has three main subunits: a(1), b(2) and c(9-12). The alpha and beta chains form an alternating ring which encloses part of the gamma chain. CF(1) is attached to CF(0) by a central stalk formed by the gamma and epsilon chains, while a peripheral stalk is formed by the delta and b chains.

The protein resides in the cell inner membrane. It catalyses the reaction ATP + H2O + 4 H(+)(in) = ADP + phosphate + 5 H(+)(out). Functionally, produces ATP from ADP in the presence of a proton gradient across the membrane. The alpha chain is a regulatory subunit. The polypeptide is ATP synthase subunit alpha (Pseudomonas aeruginosa (strain LESB58)).